The primary structure comprises 190 residues: Holliday junction branch migration complex subunit RuvA (190 aa).

The domain I stretch occupies residues 1–64 (MIGRISGQLA…EDAQILYGFG (64 aa)). Residues 65–137 (SATERAAFRQ…LKGKLGADIG (73 aa)) form a domain II region. Residues 137-141 (GVQVS) form a flexible linker region. The segment at 142–190 (VSSDSQSDILQALVALGYSDRDAALALKALPKDIGVSDGIKLALKALAK) is domain III.

This sequence belongs to the RuvA family. In terms of assembly, homotetramer. Forms an RuvA(8)-RuvB(12)-Holliday junction (HJ) complex. HJ DNA is sandwiched between 2 RuvA tetramers; dsDNA enters through RuvA and exits via RuvB. An RuvB hexamer assembles on each DNA strand where it exits the tetramer. Each RuvB hexamer is contacted by two RuvA subunits (via domain III) on 2 adjacent RuvB subunits; this complex drives branch migration. In the full resolvosome a probable DNA-RuvA(4)-RuvB(12)-RuvC(2) complex forms which resolves the HJ.

It is found in the cytoplasm. Its function is as follows. The RuvA-RuvB-RuvC complex processes Holliday junction (HJ) DNA during genetic recombination and DNA repair, while the RuvA-RuvB complex plays an important role in the rescue of blocked DNA replication forks via replication fork reversal (RFR). RuvA specifically binds to HJ cruciform DNA, conferring on it an open structure. The RuvB hexamer acts as an ATP-dependent pump, pulling dsDNA into and through the RuvAB complex. HJ branch migration allows RuvC to scan DNA until it finds its consensus sequence, where it cleaves and resolves the cruciform DNA. The chain is Holliday junction branch migration complex subunit RuvA from Polaromonas sp. (strain JS666 / ATCC BAA-500).